Here is an 88-residue protein sequence, read N- to C-terminus: uncharacterized protein (88 aa).

Expressed in a wide variety of tissues.

This is an uncharacterized protein from Homo sapiens (Human).